The chain runs to 578 residues: Arginine--tRNA ligase (578 aa).

Residues 127–137 (PNLAKEMHVGH) carry the 'HIGH' region motif.

Belongs to the class-I aminoacyl-tRNA synthetase family. As to quaternary structure, monomer.

The protein resides in the cytoplasm. It catalyses the reaction tRNA(Arg) + L-arginine + ATP = L-arginyl-tRNA(Arg) + AMP + diphosphate. The chain is Arginine--tRNA ligase from Pseudomonas putida (strain GB-1).